Here is a 386-residue protein sequence, read N- to C-terminus: 26S proteasome non-ATPase regulatory subunit 13 homolog B (386 aa).

The residue at position 2 (Ala-2) is an N-acetylalanine. The region spanning 174 to 347 is the PCI domain; sequence FSEFYKNALL…GTVYVSWAQP (174 aa).

This sequence belongs to the proteasome subunit S11 family. As to quaternary structure, component of the 19S regulatory particle (RP/PA700) lid subcomplex of the 26S proteasome. The 26S proteasome is composed of a core protease (CP), known as the 20S proteasome, capped at one or both ends by the 19S regulatory particle (RP/PA700). The RP/PA700 complex is composed of at least 17 different subunits in two subcomplexes, the base and the lid, which form the portions proximal and distal to the 20S proteolytic core, respectively. In terms of tissue distribution, ubiquitous with highest expression in flowers.

Acts as a regulatory subunit of the 26S proteasome which is involved in the ATP-dependent degradation of ubiquitinated proteins. This chain is 26S proteasome non-ATPase regulatory subunit 13 homolog B (RPN9B), found in Arabidopsis thaliana (Mouse-ear cress).